A 444-amino-acid chain; its full sequence is 23S rRNA (uracil(1939)-C(5))-methyltransferase RlmD (444 aa).

Residues 5–67 (RNRLDRTPFQ…RHFDEAKTVG (63 aa)) enclose the TRAM domain. 4 residues coordinate [4Fe-4S] cluster: cysteine 80, cysteine 86, cysteine 89, and cysteine 168. S-adenosyl-L-methionine-binding residues include glutamine 276, phenylalanine 305, asparagine 310, glutamate 326, aspartate 353, and aspartate 374. Residue cysteine 400 is the Nucleophile of the active site.

It belongs to the class I-like SAM-binding methyltransferase superfamily. RNA M5U methyltransferase family. RlmD subfamily.

The catalysed reaction is uridine(1939) in 23S rRNA + S-adenosyl-L-methionine = 5-methyluridine(1939) in 23S rRNA + S-adenosyl-L-homocysteine + H(+). Catalyzes the formation of 5-methyl-uridine at position 1939 (m5U1939) in 23S rRNA. The protein is 23S rRNA (uracil(1939)-C(5))-methyltransferase RlmD of Xanthomonas axonopodis pv. citri (strain 306).